The following is a 410-amino-acid chain: MIQALRGMNDMMDDEAKLYKKIIDVCEDTAKKYGYEYIEIPKLEETALFKRSVGESSDIVGKEMYQFTDKSGNDVCLRPEGTAGVVRAFIEHKMDRAGGVKKYFYHGSMFRYERPQKGRLREFHQFGIECFSEGSVYEDASVILMLSEILKKLDIEATLKINSLGDGDCMPKYREKLLKFLKENENELCSDCKRRISTNPIRVLDCKVEHCQKILQNAPLITENLNEICAGEFSKLQEILTANGVTFEVDPKLVRGLDYYTKTAFEFVSGEIGSQSAVGGGGRYDNLVAFLGGRPTFGVGFALGIERFMEILSSKESKQKRVGIYICALDKKYIDKIFKIGIDLRRNFKVEISYEAKNLQKHLKNADNKNAEIFLCMGENEAKNDELFMKNLIAKTNKNIKIAEILKEIR.

Belongs to the class-II aminoacyl-tRNA synthetase family. In terms of assembly, homodimer.

It is found in the cytoplasm. The enzyme catalyses tRNA(His) + L-histidine + ATP = L-histidyl-tRNA(His) + AMP + diphosphate + H(+). The polypeptide is Histidine--tRNA ligase (Campylobacter hominis (strain ATCC BAA-381 / DSM 21671 / CCUG 45161 / LMG 19568 / NCTC 13146 / CH001A)).